The sequence spans 216 residues: V-type ATP synthase subunit D (216 aa).

It belongs to the V-ATPase D subunit family.

Its function is as follows. Produces ATP from ADP in the presence of a proton gradient across the membrane. This Clostridium botulinum (strain Loch Maree / Type A3) protein is V-type ATP synthase subunit D.